The sequence spans 568 residues: MPASPGHRDVLGCLVAACVPVQPGNPSRRSMLQQSLRAQILVLLGGSLAALLLIALACFGSLTGDVRAYRELLGGPVRAAQLIDEANLQFRGQVQEWKNVLLRGRQTEAQTKYWSQFEAQERAVQDILGRLGSVAEGELKDRVERLREEHRRLGTAYRQGRQRFLEAGADPIAGDQAVTGIDRATTAQMQTLRDELHQASDLHSSSISAEARRTMLLGSLVLIGASLAVALLSLWLVNRNLVRPVQRLIEHIAQLSHGDFGERIEIRRKDELGKLALAANTLRDFLVDIFDRLRRSTRDLDSASGSLNAIASLMAAGTREQFSRTDQVATAMQEMSATAQEVARYAGDAARAADEADDSAQRGEDVMEETIRSIGEMRKEIDHTVEVIRQLESDSGRIGKVLDVIRGIAEQTNLLALNAAIEAARAGDAGRGFAVVADEVRTLAQRTAESIAEIHQIIDTVQNGAVNAARAIESGQSRSEAGAEQVANAGAMLRQITASVESIRDMNRQIATAAEEQTAVAEEISRNLTEIASIASSNQEQVEQTEAASRDLHGLSAQLGDALQRLRA.

Residues 1–39 (MPASPGHRDVLGCLVAACVPVQPGNPSRRSMLQQSLRAQ) are Cytoplasmic-facing. A helical membrane pass occupies residues 40–60 (ILVLLGGSLAALLLIALACFG). The Periplasmic portion of the chain corresponds to 61–216 (SLTGDVRAYR…ISAEARRTML (156 aa)). Residues 217–237 (LGSLVLIGASLAVALLSLWLV) traverse the membrane as a helical segment. The Cytoplasmic segment spans residues 238–568 (NRNLVRPVQR…LGDALQRLRA (331 aa)). The 53-residue stretch at 239 to 291 (RNLVRPVQRLIEHIAQLSHGDFGERIEIRRKDELGKLALAANTLRDFLVDIFD) folds into the HAMP domain. The Methyl-accepting transducer domain occupies 296 to 532 (STRDLDSASG…EISRNLTEIA (237 aa)).

This sequence belongs to the methyl-accepting chemotaxis (MCP) protein family.

It localises to the cell inner membrane. Its function is as follows. Chemotactic-signal transducers respond to changes in the concentration of attractants and repellents in the environment, transduce a signal from the outside to the inside of the cell, and facilitate sensory adaptation through the variation of the level of methylation. Chemoreceptor for inorganic phosphate, which is required for taxis at high concentrations of phosphate. Recognizes inorganic phosphate directly. Can also bind to other components that have a pyrophosphate group, including ATP and ADP. This is Methyl-accepting chemotaxis protein CtpH from Pseudomonas aeruginosa (strain ATCC 15692 / DSM 22644 / CIP 104116 / JCM 14847 / LMG 12228 / 1C / PRS 101 / PAO1).